Here is a 260-residue protein sequence, read N- to C-terminus: NAD kinase (260 aa).

Asp49 (proton acceptor) is an active-site residue. Residues 49–50 (DG), 119–120 (NE), Asp149, Ala157, and 160–165 (TAYNLS) each bind NAD(+).

Belongs to the NAD kinase family. The cofactor is a divalent metal cation.

It is found in the cytoplasm. The catalysed reaction is NAD(+) + ATP = ADP + NADP(+) + H(+). Involved in the regulation of the intracellular balance of NAD and NADP, and is a key enzyme in the biosynthesis of NADP. Catalyzes specifically the phosphorylation on 2'-hydroxyl of the adenosine moiety of NAD to yield NADP. This chain is NAD kinase, found in Caulobacter vibrioides (strain ATCC 19089 / CIP 103742 / CB 15) (Caulobacter crescentus).